Here is a 92-residue protein sequence, read N- to C-terminus: Bombyxin A-7 (92 aa).

An N-terminal signal peptide occupies residues 1–19 (MKLLLAIALMLTIVMWVST). The residue at position 20 (Gln-20) is a Pyrrolidone carboxylic acid. 3 disulfides stabilise this stretch: Cys-29–Cys-79, Cys-41–Cys-92, and Cys-78–Cys-83. Positions 50-70 (SDAQYASYGSAWLMPYSEGRG) are cleaved as a propeptide — c peptide like.

Belongs to the insulin family. Heterodimer of a B chain and an A chain linked by two disulfide bonds.

Its subcellular location is the secreted. Brain peptide responsible for activation of prothoracic glands to produce ecdysone in insects. This is Bombyxin A-7 (BBXA7) from Bombyx mori (Silk moth).